A 400-amino-acid polypeptide reads, in one-letter code: MGPRSPTAALLVLLCVGCAPTPGRGQYERYSFRSFPRDELMPLESAYRHALDQYSGEHWAESVGYLEVSLRLHRLLRDSEAFCHRNCSAATPAPAPAGPASHAELRLFGSVLRRAQCLKRCKQGLPAFRQSQPSRSVLADFQQREPYKFLQFAYFKANDLPKAIAAAHTYLLKHPDDEMMKRNMEYYKSLPGAEDHIKDLETKSYESLFVRAVRAYNGENWRTSISDMELALPDFLKAFYECLAACEGSREIKDFKDFYLSIADHYVEVLECKIRCEETLTPVIGGYPVEKFVATMYHYLQFAYYKLNDLKNAAPCAVSYLLFDQSDRVMQQNLVYYQYHRDKWGLSDEHFQPRPEAVQFFNVTTLQKELYDFAQEHLMDDDEGEVVEYVDDLLETEESA.

The N-terminal stretch at 1-25 is a signal peptide; it reads MGPRSPTAALLVLLCVGCAPTPGRG. N-linked (GlcNAc...) asparagine glycosylation is found at Asn86 and Asn362.

Belongs to the leprecan family. In terms of tissue distribution, found in articular chondrocytes. Expressed in a variety of tissues.

It is found in the secreted. Its subcellular location is the extracellular space. The protein resides in the extracellular matrix. Necessary for efficient 3-hydroxylation of fibrillar collagen prolyl residues. The chain is Cartilage-associated protein (Crtap) from Mus musculus (Mouse).